A 94-amino-acid polypeptide reads, in one-letter code: Large ribosomal subunit protein bL27 (94 aa).

The propeptide occupies 1–9; it reads MLKLNLQFF.

This sequence belongs to the bacterial ribosomal protein bL27 family. In terms of processing, the N-terminus is cleaved by ribosomal processing cysteine protease Prp.

The polypeptide is Large ribosomal subunit protein bL27 (Staphylococcus epidermidis (strain ATCC 35984 / DSM 28319 / BCRC 17069 / CCUG 31568 / BM 3577 / RP62A)).